We begin with the raw amino-acid sequence, 72 residues long: Translation initiation factor IF-1 (72 aa).

The region spanning Met-1–Lys-72 is the S1-like domain.

It belongs to the IF-1 family. As to quaternary structure, component of the 30S ribosomal translation pre-initiation complex which assembles on the 30S ribosome in the order IF-2 and IF-3, IF-1 and N-formylmethionyl-tRNA(fMet); mRNA recruitment can occur at any time during PIC assembly.

It localises to the cytoplasm. In terms of biological role, one of the essential components for the initiation of protein synthesis. Stabilizes the binding of IF-2 and IF-3 on the 30S subunit to which N-formylmethionyl-tRNA(fMet) subsequently binds. Helps modulate mRNA selection, yielding the 30S pre-initiation complex (PIC). Upon addition of the 50S ribosomal subunit IF-1, IF-2 and IF-3 are released leaving the mature 70S translation initiation complex. The sequence is that of Translation initiation factor IF-1 from Bartonella quintana (strain Toulouse) (Rochalimaea quintana).